The primary structure comprises 438 residues: UDP-N-acetylmuramoylalanine--D-glutamate ligase (438 aa).

Residue glycine 112 to threonine 118 participates in ATP binding.

It belongs to the MurCDEF family.

The protein resides in the cytoplasm. It carries out the reaction UDP-N-acetyl-alpha-D-muramoyl-L-alanine + D-glutamate + ATP = UDP-N-acetyl-alpha-D-muramoyl-L-alanyl-D-glutamate + ADP + phosphate + H(+). It functions in the pathway cell wall biogenesis; peptidoglycan biosynthesis. Its function is as follows. Cell wall formation. Catalyzes the addition of glutamate to the nucleotide precursor UDP-N-acetylmuramoyl-L-alanine (UMA). The sequence is that of UDP-N-acetylmuramoylalanine--D-glutamate ligase from Sodalis glossinidius (strain morsitans).